The following is a 448-amino-acid chain: MSFTPGKQSSSRASSGNRSGNGILKWADQSDQSRNVQTRGRRAQSKQTATSQQPSGGNVVPYYSWFSGITQFQKGKEFEFAEGQGVPIAPGVPATEAKGYWYRHNRRSFKTADGNQRQLLPRWYFYYLGTGPHAKDQYGTDIDGVYWVASNQADVNTPADILDRDPSSDEAIPTRFPPGTVLPQGYYIEGSGRSAPNSRSTSRASSRASSAGSRSRANSGNRTPTSGVTPDMADQIASLVLAKLGKDAAKPQQVTKQTAKEIRQKILNKPRQKRSPNKQCTVQQCFGKRGPNQNFGGGEMLKLGTSDPQFPILAELAPTAGAFFFGSRLELAKVQNLSGNLDEPQKDVYELRYNGAIRFDSTLSGFETIMKVLNENLNAYQQQDGTMNMSPKPQRQRGQKNGQGENDNISVAAPKSRVQQNKIRELTAEDISLLKKMDEPFTEDTSEI.

The interval 1–55 (MSFTPGKQSSSRASSGNRSGNGILKWADQSDQSRNVQTRGRRAQSKQTATSQQPS) is disordered. Residues 9 to 22 (SSSRASSGNRSGNG) are compositionally biased toward low complexity. Composition is skewed to polar residues over residues 29 to 38 (QSDQSRNVQT) and 45 to 55 (SKQTATSQQPS). An RNA-binding region spans residues 52–194 (QQPSGGNVVP…GYYIEGSGRS (143 aa)). A CoV N NTD domain is found at 61 to 190 (PYYSWFSGIT…VLPQGYYIEG (130 aa)). RNA-binding residues include arginine 106, arginine 122, and arginine 164. Disordered stretches follow at residues 158-231 (PADI…VTPD) and 383-420 (QDGT…RVQQ). Serine 167 is subject to Phosphoserine; by host. Threonine 174 bears the Phosphothreonine; by host mark. Phosphoserine; by host is present on serine 191. Low complexity predominate over residues 193–223 (RSAPNSRSTSRASSRASSAGSRSRANSGNRT). In terms of domain architecture, CoV N CTD spans 259-384 (AKEIRQKILN…ENLNAYQQQD (126 aa)). Residues 266-384 (ILNKPRQKRS…ENLNAYQQQD (119 aa)) are dimerization. Composition is skewed to polar residues over residues 383–393 (QDGTMNMSPKP) and 399–409 (QKNGQGENDNI). Serine 390 bears the Phosphoserine; by host mark. Threonine 427 carries the post-translational modification Phosphothreonine; by host.

Belongs to the betacoronavirus nucleocapsid protein family. As to quaternary structure, homooligomer. Both monomeric and oligomeric forms interact with RNA. Interacts with protein M. Interacts with NSP3; this interaction serves to tether the genome to the newly translated replicase-transcriptase complex at a very early stage of infection. Post-translationally, ADP-ribosylated. The ADP-ribosylation is retained in the virion during infection. In terms of processing, phosphorylated on serine and threonine residues.

It is found in the virion. The protein resides in the host endoplasmic reticulum-Golgi intermediate compartment. Its subcellular location is the host Golgi apparatus. Its function is as follows. Packages the positive strand viral genome RNA into a helical ribonucleocapsid (RNP) and plays a fundamental role during virion assembly through its interactions with the viral genome and membrane protein M. Plays an important role in enhancing the efficiency of subgenomic viral RNA transcription as well as viral replication. The sequence is that of Nucleoprotein from Bovine coronavirus (strain 98TXSF-110-LUN) (BCoV-LUN).